Reading from the N-terminus, the 678-residue chain is ERAD-associated E3 ubiquitin-protein ligase component HRD3A (678 aa).

Positions 1-25 (MRILSYGIVILSLLVFSFIEFGVHA) are cleaved as a signal peptide. A disordered region spans residues 40–71 (GGDDNGVGESSDFDEFGESEPKSEEELDPGSW). 8 Sel1-like repeats span residues 124 to 159 (PHAQ…AGGN), 242 to 277 (ANAM…VDKG), 279 to 313 (PRSM…AKEG), 317 to 349 (AFNG…AVDN), 353 to 386 (SGHY…ANAG), 388 to 422 (PKAF…AERG), 506 to 537 (AALL…AKSQ), and 540 to 568 (AQAM…RYYD). Residues asparagine 298 and asparagine 335 are each glycosylated (N-linked (GlcNAc...) asparagine). Residues 620–640 (VVFEEGNATILTLFVCLITIL) traverse the membrane as a helical segment.

Belongs to the sel-1 family. As to quaternary structure, interacts with OS9.

It localises to the endoplasmic reticulum membrane. Functionally, component of the endoplasmic reticulum (ER) quality control system called ER-associated degradation (ERAD) and involved in ubiquitin-dependent degradation of misfolded endoplasmic reticulum proteins. Functions as an ERAD substrate-recruiting factor that recognizes misfolded proteins for the HRD1 E3 ubiquitin ligase complex. Targets the misfolded LRR receptor kinase BRI1. In Arabidopsis thaliana (Mouse-ear cress), this protein is ERAD-associated E3 ubiquitin-protein ligase component HRD3A.